The sequence spans 780 residues: Gelsolin (780 aa).

The signal sequence occupies residues 1-25 (MAPYCSSLRSALLVLALCALSPSHA). The disordered stretch occupies residues 28–48 (ASRGRAQERAPQSRVSETRPS). The interval 51-174 (VVEHPEFLKA…YKKGGVASGF (124 aa)) is actin-severing. The Gelsolin-like 1 repeat unit spans residues 74–155 (FDLVPVPPNL…EVQGFESSTF (82 aa)). Tyr84 is modified (phosphotyrosine). Positions 90, 91, 122, 134, 139, and 141 each coordinate Ca(2+). The segment at 121–124 (DESG) is actin-actin interfilament contact point. Position 160-167 (160-167 (KSGLKYKK)) interacts with a 1,2-diacyl-sn-glycero-3-phospho-(1D-myo-inositol-4,5-bisphosphate). Position 170 (Val170) interacts with Ca(2+). 186–194 (RLFQVKGRR) lines the a 1,2-diacyl-sn-glycero-3-phospho-(1D-myo-inositol-4,5-bisphosphate) pocket. The stretch at 196 to 268 (VRATEVPVSW…SEEGSEPEAM (73 aa)) is one Gelsolin-like 2 repeat. Positions 211 and 212 each coordinate Ca(2+). A disulfide bridge links Cys213 with Cys226. 5 residues coordinate Ca(2+): Glu234, Asp284, Glu327, Asp328, and Glu352. The tract at residues 244-286 (GIRDNERSGRAQVHVSEEGSEPEAMLQVLGPKPDLPQGTEDTA) is disordered. The stretch at 315 to 387 (DENPFAQSAL…LPEGGETPLF (73 aa)) is one Gelsolin-like 3 repeat. Tyr407 and Tyr463 each carry phosphotyrosine. Residues 432-780 (AAQHGMDDDG…LDRALAELAA (349 aa)) are actin-binding, Ca-sensitive. The stretch at 453–534 (SNKVLVDPAT…VQGKEPAHLM (82 aa)) is one Gelsolin-like 4 repeat. Residues Gly469, Asp470, Glu500, Asp512, Gly517, Pro519, and Thr549 each coordinate Ca(2+). The stretch at 576-640 (AVEVMPKAGA…EEGSEPDGFW (65 aa)) is one Gelsolin-like 5 repeat. Lys582 carries the N6-acetyllysine modification. Positions 589 and 590 each coordinate Ca(2+). Tyr601 carries the post-translational modification Phosphotyrosine. Glu612 provides a ligand contact to Ca(2+). The residue at position 649 (Tyr649) is a Phosphotyrosine. A Gelsolin-like 6 repeat occupies 679-754 (IEEVPGELMQ…VRQGFEPPSF (76 aa)). Ca(2+) is bound by residues Asp694, Asp695, and Glu717. A Phosphothreonine modification is found at Thr740.

This sequence belongs to the villin/gelsolin family. As to quaternary structure, binds to actin and to fibronectin. Identified in a complex composed of ACTA1, COBL, GSN and TMSB4X. Interacts with the inactive form of EIF2AK2/PKR. Interacts with FLII. Post-translationally, phosphorylated on tyrosine residues in vitro.

The protein resides in the secreted. Its subcellular location is the cytoplasm. It is found in the cytoskeleton. In terms of biological role, calcium-regulated, actin-modulating protein that binds to the plus (or barbed) ends of actin monomers or filaments, preventing monomer exchange (end-blocking or capping). It can promote the assembly of monomers into filaments (nucleation) as well as sever filaments already formed. Plays a role in ciliogenesis. This Rattus norvegicus (Rat) protein is Gelsolin (Gsn).